The following is a 401-amino-acid chain: MDSSAVPANASNCTDDALAYSSCSPAPSPGSWVNLSHLDGNLSDPCGPNRTDLGGRDSLCPPTGSPSMITAITIMALYSIVCVVGLFGNFLVMYVIVRYTKMKTATNIYIFNLALADALATSTLPFQSVNYLMGTWPFGTILCKIVISIDYYNMFTSIFTLCTMSVDRYIAVCHPVKALDFRTPRNAKIINVCNWILSSAIGLPVMFMATTKYRHGSIDCTLTFSHPTWYWENLLKICVFIFAFIMPVLIITVCYGLMILRLKSVRMLSGSKEKDRNLRRITRMVLVVVAVFIVCWTPIHIYVIIKALVTIPETTFQTVSWHFCIALGYTNSCLNPVLYAFLDENFKRCFREFCIPTSSNIEQQNSTRIRQNTRDHPSTANTVDRTNHQLENLEAETAPLP.

Over 1 to 69 the chain is Extracellular; sequence MDSSAVPANA…CPPTGSPSMI (69 aa). Residues asparagine 9, asparagine 12, asparagine 34, asparagine 41, and asparagine 49 are each glycosylated (N-linked (GlcNAc...) asparagine). Residues 70-94 traverse the membrane as a helical segment; it reads TAITIMALYSIVCVVGLFGNFLVMY. At 95–107 the chain is on the cytoplasmic side; the sequence is VIVRYTKMKTATN. Residues 108-132 traverse the membrane as a helical segment; that stretch reads IYIFNLALADALATSTLPFQSVNYL. Residues 133–143 are Extracellular-facing; sequence MGTWPFGTILC. Cysteine 143 and cysteine 220 are oxidised to a cystine. A helical transmembrane segment spans residues 144 to 166; it reads KIVISIDYYNMFTSIFTLCTMSV. Residues 167–186 lie on the Cytoplasmic side of the membrane; that stretch reads DRYIAVCHPVKALDFRTPRN. Position 169 is a phosphotyrosine (tyrosine 169). The helical transmembrane segment at 187 to 208 threads the bilayer; sequence AKIINVCNWILSSAIGLPVMFM. Residues 209 to 231 lie on the Extracellular side of the membrane; it reads ATTKYRHGSIDCTLTFSHPTWYW. A helical membrane pass occupies residues 232-256; the sequence is ENLLKICVFIFAFIMPVLIITVCYG. The Cytoplasmic portion of the chain corresponds to 257–280; the sequence is LMILRLKSVRMLSGSKEKDRNLRR. A helical transmembrane segment spans residues 281 to 307; sequence ITRMVLVVVAVFIVCWTPIHIYVIIKA. The Extracellular segment spans residues 308 to 315; sequence LVTIPETT. The chain crosses the membrane as a helical span at residues 316–339; the sequence is FQTVSWHFCIALGYTNSCLNPVLY. The NPxxY; plays a role in stabilizing the activated conformation of the receptor motif lies at 335–339; that stretch reads NPVLY. Over 340–401 the chain is Cytoplasmic; the sequence is AFLDENFKRC…NLEAETAPLP (62 aa). Cysteine 354 carries S-palmitoyl cysteine lipidation. Positions 365 to 388 are disordered; the sequence is NSTRIRQNTRDHPSTANTVDRTNH. Serine 366 is modified (phosphoserine). Threonine 373 carries the post-translational modification Phosphothreonine. The residue at position 378 (serine 378) is a Phosphoserine. Threonine 397 carries the post-translational modification Phosphothreonine.

It belongs to the G-protein coupled receptor 1 family. Forms homooligomers and heterooligomers with other GPCRs, such as OPRD1, OPRK1, OPRL1, NPFFR2, ADRA2A, SSTR2, CNR1 and CCR5 (probably in dimeric forms). Interacts with heterotrimeric G proteins; interaction with a heterotrimeric complex containing GNAI1, GNB1 and GNG2 stabilizes the active conformation of the receptor and increases its affinity for endomorphin-2, the synthetic opioid peptide DAMGO and for morphinan agonists. Interacts with PPL; the interaction disrupts agonist-mediated G-protein activation. Interacts (via C-terminus) with DNAJB4 (via C-terminus). Interacts with calmodulin; the interaction inhibits the constitutive activity of OPRM1; it abolishes basal and attenuates agonist-stimulated G-protein coupling. Interacts with FLNA, PLD2, RANBP9 and WLS and GPM6A. Interacts with RTP4. Interacts with SYP and GNAS. Interacts with RGS9, RGS17, RGS20, RGS4, PPP1R9B and HINT1. In terms of processing, phosphorylated. Differentially phosphorylated in basal and agonist-induced conditions. Agonist-mediated phosphorylation modulates receptor internalization. Phosphorylated by GRK2 in a agonist-dependent manner. Phosphorylation at Tyr-169 requires receptor activation, is dependent on non-receptor protein tyrosine kinase Src and results in a decrease in agonist efficacy by reducing G-protein coupling efficiency. Phosphorylated on tyrosine residues; the phosphorylation is involved in agonist-induced G-protein-independent receptor down-regulation. Phosphorylation at Ser-378 is involved in G-protein-dependent but not beta-arrestin-dependent activation of the ERK pathway. Ubiquitinated. A basal ubiquitination seems not to be related to degradation. Ubiquitination is increased upon formation of OPRM1:OPRD1 oligomers leading to proteasomal degradation; the ubiquitination is diminished by RTP4.

The protein localises to the cell membrane. It localises to the cell projection. The protein resides in the axon. It is found in the perikaryon. Its subcellular location is the dendrite. The protein localises to the endosome. Receptor for endogenous opioids such as beta-endorphin and endomorphin. Receptor for natural and synthetic opioids including morphine, heroin, DAMGO, fentanyl, etorphine, buprenorphin and methadone. Also activated by enkephalin peptides, such as Met-enkephalin or Met-enkephalin-Arg-Phe, with higher affinity for Met-enkephalin-Arg-Phe. Agonist binding to the receptor induces coupling to an inactive GDP-bound heterotrimeric G-protein complex and subsequent exchange of GDP for GTP in the G-protein alpha subunit leading to dissociation of the G-protein complex with the free GTP-bound G-protein alpha and the G-protein beta-gamma dimer activating downstream cellular effectors. The agonist- and cell type-specific activity is predominantly coupled to pertussis toxin-sensitive G(i) and G(o) G alpha proteins, GNAI1, GNAI2, GNAI3 and GNAO1, and to a lesser extent to pertussis toxin-insensitive G alpha proteins GNAZ and GNA15. They mediate an array of downstream cellular responses, including inhibition of adenylate cyclase activity and both N-type and L-type calcium channels, activation of inward rectifying potassium channels, mitogen-activated protein kinase (MAPK), phospholipase C (PLC), phosphoinositide/protein kinase (PKC), phosphoinositide 3-kinase (PI3K) and regulation of NF-kappa-B. Also couples to adenylate cyclase stimulatory G alpha proteins. The selective temporal coupling to G-proteins and subsequent signaling can be regulated by RGSZ proteins, such as RGS9, RGS17 and RGS4. Phosphorylation by members of the GPRK subfamily of Ser/Thr protein kinases and association with beta-arrestins is involved in short-term receptor desensitization. Beta-arrestins associate with the GPRK-phosphorylated receptor and uncouple it from the G-protein thus terminating signal transduction. The phosphorylated receptor is internalized through endocytosis via clathrin-coated pits which involves beta-arrestins. The activation of the ERK pathway occurs either in a G-protein-dependent or a beta-arrestin-dependent manner and is regulated by agonist-specific receptor phosphorylation. Acts as a class A G-protein coupled receptor (GPCR) which dissociates from beta-arrestin at or near the plasma membrane and undergoes rapid recycling. Receptor down-regulation pathways are varying with the agonist and occur dependent or independent of G-protein coupling. Endogenous ligands induce rapid desensitization, endocytosis and recycling. Heterooligomerization with other GPCRs can modulate agonist binding, signaling and trafficking properties. Involved in neurogenesis. This chain is Mu-type opioid receptor (OPRM1), found in Pan troglodytes (Chimpanzee).